Here is a 204-residue protein sequence, read N- to C-terminus: Holliday junction branch migration complex subunit RuvA (204 aa).

A domain I region spans residues 1–65; it reads MIGRLRGAVA…SAGLRLYGFG (65 aa). The tract at residues 66–142 is domain II; sequence TREDRRAFVL…PITDGPVLMT (77 aa). A flexible linker region spans residues 143-152; sequence APGAVAAAPA. A domain III region spans residues 152 to 204; that stretch reads AKAAPTGDAVAALMGLGVAEVNARRVVEAAAAKLGDEATVQALIKAGLQELGR.

The protein belongs to the RuvA family. As to quaternary structure, homotetramer. Forms an RuvA(8)-RuvB(12)-Holliday junction (HJ) complex. HJ DNA is sandwiched between 2 RuvA tetramers; dsDNA enters through RuvA and exits via RuvB. An RuvB hexamer assembles on each DNA strand where it exits the tetramer. Each RuvB hexamer is contacted by two RuvA subunits (via domain III) on 2 adjacent RuvB subunits; this complex drives branch migration. In the full resolvosome a probable DNA-RuvA(4)-RuvB(12)-RuvC(2) complex forms which resolves the HJ.

The protein localises to the cytoplasm. Functionally, the RuvA-RuvB-RuvC complex processes Holliday junction (HJ) DNA during genetic recombination and DNA repair, while the RuvA-RuvB complex plays an important role in the rescue of blocked DNA replication forks via replication fork reversal (RFR). RuvA specifically binds to HJ cruciform DNA, conferring on it an open structure. The RuvB hexamer acts as an ATP-dependent pump, pulling dsDNA into and through the RuvAB complex. HJ branch migration allows RuvC to scan DNA until it finds its consensus sequence, where it cleaves and resolves the cruciform DNA. This Caulobacter sp. (strain K31) protein is Holliday junction branch migration complex subunit RuvA.